The chain runs to 291 residues: Shikimate dehydrogenase (NADP(+)) (291 aa).

Residues 26–28 and Ser-73 each bind shikimate; that span reads SLS. Lys-77 serves as the catalytic Proton acceptor. The shikimate site is built by Asn-98 and Asp-113. Residues 137 to 141 and Val-238 each bind NADP(+); that span reads GAGGA. Residue Tyr-240 participates in shikimate binding. Gly-261 lines the NADP(+) pocket.

It belongs to the shikimate dehydrogenase family. As to quaternary structure, homodimer.

It carries out the reaction shikimate + NADP(+) = 3-dehydroshikimate + NADPH + H(+). It participates in metabolic intermediate biosynthesis; chorismate biosynthesis; chorismate from D-erythrose 4-phosphate and phosphoenolpyruvate: step 4/7. In terms of biological role, involved in the biosynthesis of the chorismate, which leads to the biosynthesis of aromatic amino acids. Catalyzes the reversible NADPH linked reduction of 3-dehydroshikimate (DHSA) to yield shikimate (SA). The sequence is that of Shikimate dehydrogenase (NADP(+)) from Listeria monocytogenes serotype 4b (strain F2365).